The primary structure comprises 115 residues: NADH-ubiquinone oxidoreductase chain 3 (115 aa).

3 helical membrane-spanning segments follow: residues 4–24, 55–75, and 87–107; these read LTVL…AFWL, FFLV…LLPL, and MMLT…YEWM.

Belongs to the complex I subunit 3 family. In terms of assembly, core subunit of respiratory chain NADH dehydrogenase (Complex I) which is composed of 45 different subunits. Interacts with TMEM186. Interacts with TMEM242.

Its subcellular location is the mitochondrion inner membrane. The catalysed reaction is a ubiquinone + NADH + 5 H(+)(in) = a ubiquinol + NAD(+) + 4 H(+)(out). Functionally, core subunit of the mitochondrial membrane respiratory chain NADH dehydrogenase (Complex I) which catalyzes electron transfer from NADH through the respiratory chain, using ubiquinone as an electron acceptor. Essential for the catalytic activity of complex I. The protein is NADH-ubiquinone oxidoreductase chain 3 of Peromyscus slevini (Slevin's mouse).